The sequence spans 492 residues: Phosphatidylinositol-glycan biosynthesis class W protein (492 aa).

5 helical membrane-spanning segments follow: residues 26–46 (FILT…ATFF), 59–79 (FILE…FTEL), 82–102 (FLIV…QKNV), 127–147 (YRAF…FQVF), and 156–176 (TYGI…GALV). A disordered region spans residues 185 to 216 (IEKQQKKKREEEEDDNDKINKTSSSSSSSSSA). N-linked (GlcNAc...) asparagine glycosylation is present at N204. Residues 205 to 216 (KTSSSSSSSSSA) show a composition bias toward low complexity. Residues 264 to 284 (YGLHWNFFFTLGFVSISLAFL) traverse the membrane as a helical segment. The N-linked (GlcNAc...) asparagine glycan is linked to N289. 4 helical membrane-spanning segments follow: residues 290–310 (ISAI…NSFG), 331–351 (ICSF…GTEL), 364–384 (FATK…LCEI), and 399–419 (VLAI…ITLI). N424 carries an N-linked (GlcNAc...) asparagine glycan. Helical transmembrane passes span 437-457 (LFIF…MKTI) and 464-484 (SMII…ILDY).

The protein belongs to the PIGW family.

The protein resides in the endoplasmic reticulum membrane. It participates in glycolipid biosynthesis; glycosylphosphatidylinositol-anchor biosynthesis. Probable acetyltransferase, which acetylates the inositol ring of phosphatidylinositol during biosynthesis of GPI-anchor. The sequence is that of Phosphatidylinositol-glycan biosynthesis class W protein from Dictyostelium discoideum (Social amoeba).